The following is a 661-amino-acid chain: DNA ligase (661 aa).

NAD(+)-binding positions include 31 to 35 (DKEYD), 79 to 80 (SL), and Glu112. Lys114 serves as the catalytic N6-AMP-lysine intermediate. Positions 135, 169, 281, and 305 each coordinate NAD(+). Zn(2+)-binding residues include Cys398, Cys401, Cys414, and Cys420. In terms of domain architecture, BRCT spans 578–661 (QQENIFLGKT…ISEAEFEAML (84 aa)).

It belongs to the NAD-dependent DNA ligase family. LigA subfamily. It depends on Mg(2+) as a cofactor. Mn(2+) serves as cofactor.

It catalyses the reaction NAD(+) + (deoxyribonucleotide)n-3'-hydroxyl + 5'-phospho-(deoxyribonucleotide)m = (deoxyribonucleotide)n+m + AMP + beta-nicotinamide D-nucleotide.. Its function is as follows. DNA ligase that catalyzes the formation of phosphodiester linkages between 5'-phosphoryl and 3'-hydroxyl groups in double-stranded DNA using NAD as a coenzyme and as the energy source for the reaction. It is essential for DNA replication and repair of damaged DNA. The protein is DNA ligase of Alkaliphilus oremlandii (strain OhILAs) (Clostridium oremlandii (strain OhILAs)).